The chain runs to 140 residues: Large-conductance mechanosensitive channel (140 aa).

A run of 2 helical transmembrane segments spans residues 16–36 and 84–104; these read VIDL…VTAL and INTV…VKLI.

It belongs to the MscL family. In terms of assembly, homopentamer.

It is found in the cell inner membrane. Its function is as follows. Channel that opens in response to stretch forces in the membrane lipid bilayer. May participate in the regulation of osmotic pressure changes within the cell. This is Large-conductance mechanosensitive channel from Xanthomonas oryzae pv. oryzae (strain PXO99A).